Reading from the N-terminus, the 614-residue chain is Putative amino acid transporter AAT1 (614 aa).

The next 11 membrane-spanning stretches (helical) occupy residues 184-216 (VLFLCTAIGVGLLSIPYVFSELGIILSIILILL), 222-243 (YITTNILCMSSLEHNIFVYGNL), 255-275 (LIDFGLTFSFLSGYVLVLILV), 295-311 (RIFITIVICLLVLPLTF), 318-340 (INCFLVFSLFSITLTVLAVGYQS), 360-380 (HFFKCFNILLFSFSQQSNACF), 401-417 (ILIQVIFYTLFGLLGYL), 437-459 (SILLCKFFLCISFFFSIPLNFIA), 531-547 (CAAIFVTCLCAFVEFNV), 553-575 (FIGIFGGFTSSIISCILPNLIYY), and 587-613 (RYATLALLCFFSVIGLISSIVTAFIII).

This sequence belongs to the amino acid/polyamine transporter 2 family.

The protein localises to the vacuole membrane. Its function is as follows. Putative amino acid transporter. Involved in maintaining the osmotic homeostasis of the digestive vacuole. Important for the timely development and growth of the asexual-stage parasites and male gametocyte maturation. This Plasmodium berghei (strain Anka) protein is Putative amino acid transporter AAT1.